Reading from the N-terminus, the 183-residue chain is Protein US32 (183 aa).

It belongs to the herpesviridae US1 family.

The sequence is that of Protein US32 (US32) from Homo sapiens (Human).